Here is a 220-residue protein sequence, read N- to C-terminus: 7-cyano-7-deazaguanine synthase 1 (220 aa).

F10–L20 is a binding site for ATP. Positions 183, 191, 194, and 197 each coordinate Zn(2+).

It belongs to the QueC family. As to quaternary structure, homodimer. It depends on Zn(2+) as a cofactor.

It catalyses the reaction 7-carboxy-7-deazaguanine + NH4(+) + ATP = 7-cyano-7-deazaguanine + ADP + phosphate + H2O + H(+). Its pathway is purine metabolism; 7-cyano-7-deazaguanine biosynthesis. Functionally, catalyzes the ATP-dependent conversion of 7-carboxy-7-deazaguanine (CDG) to 7-cyano-7-deazaguanine (preQ(0)). In Desulfitobacterium hafniense (strain Y51), this protein is 7-cyano-7-deazaguanine synthase 1.